A 351-amino-acid polypeptide reads, in one-letter code: Spermidine/putrescine import ATP-binding protein PotA (351 aa).

An ABC transporter domain is found at 6 to 236 (LELRNVTKEY…PENAWVANFI (231 aa)). ATP is bound at residue 38 to 45 (GPSGCGKT).

The protein belongs to the ABC transporter superfamily. Spermidine/putrescine importer (TC 3.A.1.11.1) family. The complex is composed of two ATP-binding proteins (PotA), two transmembrane proteins (PotB and PotC) and a solute-binding protein (PotD).

The protein resides in the cell membrane. It carries out the reaction ATP + H2O + polyamine-[polyamine-binding protein]Side 1 = ADP + phosphate + polyamineSide 2 + [polyamine-binding protein]Side 1.. Part of the ABC transporter complex PotABCD involved in spermidine/putrescine import. Responsible for energy coupling to the transport system. The chain is Spermidine/putrescine import ATP-binding protein PotA from Mycoplasma mycoides subsp. mycoides SC (strain CCUG 32753 / NCTC 10114 / PG1).